Here is a 947-residue protein sequence, read N- to C-terminus: Bifunctional glutamine synthetase adenylyltransferase/adenylyl-removing enzyme (947 aa).

Positions 1–440 (MTPLSSPLSQ…VFNELIGDDE (440 aa)) are adenylyl removase. The interval 450 to 947 (SEPWREVWQD…ASWRKWLVAV (498 aa)) is adenylyl transferase.

This sequence belongs to the GlnE family. Mg(2+) is required as a cofactor.

The enzyme catalyses [glutamine synthetase]-O(4)-(5'-adenylyl)-L-tyrosine + phosphate = [glutamine synthetase]-L-tyrosine + ADP. It catalyses the reaction [glutamine synthetase]-L-tyrosine + ATP = [glutamine synthetase]-O(4)-(5'-adenylyl)-L-tyrosine + diphosphate. Its function is as follows. Involved in the regulation of glutamine synthetase GlnA, a key enzyme in the process to assimilate ammonia. When cellular nitrogen levels are high, the C-terminal adenylyl transferase (AT) inactivates GlnA by covalent transfer of an adenylyl group from ATP to specific tyrosine residue of GlnA, thus reducing its activity. Conversely, when nitrogen levels are low, the N-terminal adenylyl removase (AR) activates GlnA by removing the adenylyl group by phosphorolysis, increasing its activity. The regulatory region of GlnE binds the signal transduction protein PII (GlnB) which indicates the nitrogen status of the cell. In Salmonella paratyphi B (strain ATCC BAA-1250 / SPB7), this protein is Bifunctional glutamine synthetase adenylyltransferase/adenylyl-removing enzyme.